The primary structure comprises 377 residues: Mucin-7 (377 aa).

A signal peptide spans 1–22 (MKTLPLFVCICALSACFSFSEG). Positions 70–100 (CRPKLPPSPNNPPKFPNPHQPPKHPDKNSSV) are disordered. Positions 73-89 (KLPPSPNNPPKFPNPHQ) are enriched in pro residues. Residues asparagine 97, asparagine 128, asparagine 135, and asparagine 146 are each glycosylated (N-linked (GlcNAc...) asparagine). Residues 150-355 (SVATLAPVNS…QPTSAPGQNK (206 aa)) form a disordered region. 6 repeat units span residues 165–187 (TTAAPPTPSATTPAPPSSSAPPE), 188–210 (TTAAPPTPSATTQAPPSSSAPPE), 211–233 (TTAAPPTPPATTPAPPSSSAPPE), 234–256 (TTAAPPTPSATTPAPLSSSAPPE), 257–279 (TTAVPPTPSATTLDPSSASAPPE), and 280–302 (TTAAPPTPSATTPAPPSSPAPQE). The segment covering 169–183 (PPTPSATTPAPPSSS) has biased composition (pro residues). A glycan (O-linked (GalNAc) threonine; by GALNT13) is linked at threonine 176. 2 O-linked (GalNAc) serine; by GALNT13 glycosylation sites follow: serine 182 and serine 183. A compositionally biased stretch (low complexity) spans 184 to 214 (APPETTAAPPTPSATTQAPPSSSAPPETTAA). Residues threonine 188 and threonine 189 are each glycosylated (O-linked (GalNAc) threonine; by GALNT13). The span at 215-229 (PPTPPATTPAPPSSS) shows a compositional bias: pro residues. The span at 230–283 (APPETTAAPPTPSATTPAPLSSSAPPETTAVPPTPSATTLDPSSASAPPETTAA) shows a compositional bias: low complexity. Over residues 284–298 (PPTPSATTPAPPSSP) the composition is skewed to pro residues. The segment covering 309–329 (TTPNSSPTTLAPDTSETSAAP) has biased composition (polar residues). The segment covering 330-348 (THQTTTSVTTQTTTTKQPT) has biased composition (low complexity).

As to quaternary structure, monomer. In terms of processing, N- and O-glycosylated. Contains fucose, mannose, galactose, N-acetylglucosamine and N-acetylgalactosamine. As to expression, expressed in salivary gland tissues and only in those that contain mucous acinar cells (e.g. sublingual and submandibular glands) and not in salivary glands containing only serous acinar cells (e.g. parotid gland).

It localises to the secreted. Its function is as follows. May function in a protective capacity by promoting the clearance of bacteria in the oral cavity and aiding in mastication, speech, and swallowing. Binds P.aeruginosa pili. The chain is Mucin-7 (MUC7) from Homo sapiens (Human).